The chain runs to 32 residues: Kappa-theraphotoxin-Gr2b (32 aa).

Cystine bridges form between C2–C16, C9–C21, and C15–C25.

It belongs to the neurotoxin 30 (phrixotoxin) family. Expressed by the venom gland.

It localises to the secreted. In terms of biological role, binds the voltage-sensor domain of the potassium channel KvAP (from the archaeon Aeropyrum pernix) and affects channel gating. The protein is Kappa-theraphotoxin-Gr2b of Grammostola rosea (Chilean rose tarantula).